We begin with the raw amino-acid sequence, 169 residues long: Shikimate kinase (169 aa).

12 to 17 (GAGKST) provides a ligand contact to ATP. Ser16 contributes to the Mg(2+) binding site. Residues Asp34, Arg58, and Gly80 each coordinate substrate. Residue Arg117 participates in ATP binding. A substrate-binding site is contributed by Arg136.

Belongs to the shikimate kinase family. As to quaternary structure, monomer. It depends on Mg(2+) as a cofactor.

The protein localises to the cytoplasm. It catalyses the reaction shikimate + ATP = 3-phosphoshikimate + ADP + H(+). Its pathway is metabolic intermediate biosynthesis; chorismate biosynthesis; chorismate from D-erythrose 4-phosphate and phosphoenolpyruvate: step 5/7. In terms of biological role, catalyzes the specific phosphorylation of the 3-hydroxyl group of shikimic acid using ATP as a cosubstrate. This is Shikimate kinase from Rhodococcus erythropolis (strain PR4 / NBRC 100887).